The chain runs to 556 residues: 2-succinyl-5-enolpyruvyl-6-hydroxy-3-cyclohexene-1-carboxylate synthase (556 aa).

It belongs to the TPP enzyme family. MenD subfamily. In terms of assembly, homodimer. Mg(2+) serves as cofactor. It depends on Mn(2+) as a cofactor. The cofactor is thiamine diphosphate.

The enzyme catalyses isochorismate + 2-oxoglutarate + H(+) = 5-enolpyruvoyl-6-hydroxy-2-succinyl-cyclohex-3-ene-1-carboxylate + CO2. It functions in the pathway quinol/quinone metabolism; 1,4-dihydroxy-2-naphthoate biosynthesis; 1,4-dihydroxy-2-naphthoate from chorismate: step 2/7. It participates in quinol/quinone metabolism; menaquinone biosynthesis. Functionally, catalyzes the thiamine diphosphate-dependent decarboxylation of 2-oxoglutarate and the subsequent addition of the resulting succinic semialdehyde-thiamine pyrophosphate anion to isochorismate to yield 2-succinyl-5-enolpyruvyl-6-hydroxy-3-cyclohexene-1-carboxylate (SEPHCHC). This chain is 2-succinyl-5-enolpyruvyl-6-hydroxy-3-cyclohexene-1-carboxylate synthase, found in Escherichia fergusonii (strain ATCC 35469 / DSM 13698 / CCUG 18766 / IAM 14443 / JCM 21226 / LMG 7866 / NBRC 102419 / NCTC 12128 / CDC 0568-73).